We begin with the raw amino-acid sequence, 102 residues long: Large ribosomal subunit protein uL24 (102 aa).

The protein belongs to the universal ribosomal protein uL24 family. Part of the 50S ribosomal subunit.

In terms of biological role, one of two assembly initiator proteins, it binds directly to the 5'-end of the 23S rRNA, where it nucleates assembly of the 50S subunit. Its function is as follows. One of the proteins that surrounds the polypeptide exit tunnel on the outside of the subunit. The sequence is that of Large ribosomal subunit protein uL24 from Cupriavidus metallidurans (strain ATCC 43123 / DSM 2839 / NBRC 102507 / CH34) (Ralstonia metallidurans).